Consider the following 455-residue polypeptide: Protein indeterminate-domain 7 (455 aa).

The disordered stretch occupies residues 1–52 (MMMNRDILFHQQQQQQMEENMSNLTSASGDQASVSSGNRTETSGSNINQHHQ). The segment covering 17 to 49 (MEENMSNLTSASGDQASVSSGNRTETSGSNINQ) has biased composition (polar residues). At Ser-82 the chain carries Phosphoserine. 2 C2H2-type zinc fingers span residues 92-114 (FICE…KRGH) and 134-164 (YVCP…FRKH). The Nuclear localization signal signature appears at 156 to 163 (IKKHFFRK). Residues 169-192 (WKCEKCSKKYAVQSDWKAHAKTCG) form a C2H2-type 2; degenerate zinc finger. 8 residues coordinate Zn(2+): Cys-171, Cys-174, His-187, Cys-191, Cys-198, Cys-200, His-213, and Cys-217. The CCHC-type 2; atypical zinc finger occupies 196-219 (YKCDCGTLFSRRDSFITHRAFCDA). The interval 206–218 (RRDSFITHRAFCD) is SHR-binding. The segment at 235 to 351 (QASNSPHHHH…PEEEERSSRS (117 aa)) is disordered. Low complexity-rich tracts occupy residues 248–265 (QQNI…SNSN) and 288–299 (SSNPNPNGNNGN).

It localises to the nucleus. Its function is as follows. Probable transcription factor. This chain is Protein indeterminate-domain 7, found in Arabidopsis thaliana (Mouse-ear cress).